The following is a 501-amino-acid chain: O-phosphoseryl-tRNA(Sec) selenium transferase (501 aa).

A tetramerization region spans residues 1–44 (MNRESFAAGERLVSPAYVRQGCEARRSHEHLIRLLLEKGKCPEN). Position 14 is a phosphoserine (Ser14). Arg75 serves as a coordination point for pyridoxal 5'-phosphate. Residues 96 to 106 (GRSGDISAVQP) form a phosphate loop (P-loop) region. Residues Arg97, Ser98, and Gln105 each contribute to the substrate site. Arg271 is a binding site for tRNA. An N6-(pyridoxal phosphate)lysine modification is found at Lys284. Residue Arg313 participates in substrate binding. 2 residues coordinate tRNA: Arg398 and Lys463.

This sequence belongs to the SepSecS family. Homotetramer formed by a catalytic dimer and a non-catalytic dimer serving as a binding platform that orients tRNASec for catalysis. Each tetramer binds the CCA ends of two tRNAs which point to the active sites of the catalytic dimer. The cofactor is pyridoxal 5'-phosphate.

It localises to the cytoplasm. It carries out the reaction O-phospho-L-seryl-tRNA(Sec) + selenophosphate + H2O = L-selenocysteinyl-tRNA(Sec) + 2 phosphate. The protein operates within aminoacyl-tRNA biosynthesis; selenocysteinyl-tRNA(Sec) biosynthesis; selenocysteinyl-tRNA(Sec) from L-seryl-tRNA(Sec) (archaeal/eukaryal route): step 2/2. Its function is as follows. Converts O-phosphoseryl-tRNA(Sec) to selenocysteinyl-tRNA(Sec) required for selenoprotein biosynthesis. This Pongo abelii (Sumatran orangutan) protein is O-phosphoseryl-tRNA(Sec) selenium transferase (SEPSECS).